The chain runs to 462 residues: Cysteine--tRNA ligase (462 aa).

Cys24 is a binding site for Zn(2+). A 'HIGH' region motif is present at residues 26–36; sequence PTVYDDAHLGH. The Zn(2+) site is built by Cys199, His224, and Glu228. A 'KMSKS' region motif is present at residues 256-260; the sequence is KMSKS. An ATP-binding site is contributed by Lys259.

Belongs to the class-I aminoacyl-tRNA synthetase family. In terms of assembly, monomer. The cofactor is Zn(2+).

The protein resides in the cytoplasm. It catalyses the reaction tRNA(Cys) + L-cysteine + ATP = L-cysteinyl-tRNA(Cys) + AMP + diphosphate. This is Cysteine--tRNA ligase (cysS) from Campylobacter jejuni subsp. jejuni serotype O:2 (strain ATCC 700819 / NCTC 11168).